The chain runs to 329 residues: Ketol-acid reductoisomerase (NADP(+)) (329 aa).

A KARI N-terminal Rossmann domain is found at 2–182; the sequence is TQLFYDTDAD…GGTRAGILET (181 aa). Residues 25-28, serine 51, serine 53, and 83-86 each bind NADP(+); these read YGSQ and DEFQ. Histidine 108 is a catalytic residue. Residue glycine 134 coordinates NADP(+). Residues 183 to 328 enclose the KARI C-terminal knotted domain; the sequence is NFKEETETDL…KGLRAMFSWL (146 aa). The Mg(2+) site is built by aspartate 191, glutamate 195, glutamate 227, and glutamate 231. Serine 252 contacts substrate.

Belongs to the ketol-acid reductoisomerase family. Requires Mg(2+) as cofactor.

The enzyme catalyses (2R)-2,3-dihydroxy-3-methylbutanoate + NADP(+) = (2S)-2-acetolactate + NADPH + H(+). The catalysed reaction is (2R,3R)-2,3-dihydroxy-3-methylpentanoate + NADP(+) = (S)-2-ethyl-2-hydroxy-3-oxobutanoate + NADPH + H(+). It participates in amino-acid biosynthesis; L-isoleucine biosynthesis; L-isoleucine from 2-oxobutanoate: step 2/4. Its pathway is amino-acid biosynthesis; L-valine biosynthesis; L-valine from pyruvate: step 2/4. Functionally, involved in the biosynthesis of branched-chain amino acids (BCAA). Catalyzes an alkyl-migration followed by a ketol-acid reduction of (S)-2-acetolactate (S2AL) to yield (R)-2,3-dihydroxy-isovalerate. In the isomerase reaction, S2AL is rearranged via a Mg-dependent methyl migration to produce 3-hydroxy-3-methyl-2-ketobutyrate (HMKB). In the reductase reaction, this 2-ketoacid undergoes a metal-dependent reduction by NADPH to yield (R)-2,3-dihydroxy-isovalerate. This is Ketol-acid reductoisomerase (NADP(+)) from Prochlorococcus marinus (strain MIT 9515).